We begin with the raw amino-acid sequence, 538 residues long: Chaperonin GroEL (538 aa).

Residues 29–32, 86–90, Gly-413, 479–481, and Asp-495 contribute to the ATP site; these read TLGP, DGTTT, and DAL.

It belongs to the chaperonin (HSP60) family. In terms of assembly, forms a cylinder of 14 subunits composed of two heptameric rings stacked back-to-back. Interacts with the co-chaperonin GroES.

It localises to the cytoplasm. It carries out the reaction ATP + H2O + a folded polypeptide = ADP + phosphate + an unfolded polypeptide.. Its function is as follows. Together with its co-chaperonin GroES, plays an essential role in assisting protein folding. The GroEL-GroES system forms a nano-cage that allows encapsulation of the non-native substrate proteins and provides a physical environment optimized to promote and accelerate protein folding. The chain is Chaperonin GroEL from Thermotoga petrophila (strain ATCC BAA-488 / DSM 13995 / JCM 10881 / RKU-1).